Here is a 299-residue protein sequence, read N- to C-terminus: ATP phosphoribosyltransferase (299 aa).

It belongs to the ATP phosphoribosyltransferase family. Long subfamily. In terms of assembly, equilibrium between an active dimeric form, an inactive hexameric form and higher aggregates. Interconversion between the various forms is largely reversible and is influenced by the natural substrates and inhibitors of the enzyme. The cofactor is Mg(2+).

The protein localises to the cytoplasm. It carries out the reaction 1-(5-phospho-beta-D-ribosyl)-ATP + diphosphate = 5-phospho-alpha-D-ribose 1-diphosphate + ATP. It participates in amino-acid biosynthesis; L-histidine biosynthesis; L-histidine from 5-phospho-alpha-D-ribose 1-diphosphate: step 1/9. With respect to regulation, feedback inhibited by histidine. In terms of biological role, catalyzes the condensation of ATP and 5-phosphoribose 1-diphosphate to form N'-(5'-phosphoribosyl)-ATP (PR-ATP). Has a crucial role in the pathway because the rate of histidine biosynthesis seems to be controlled primarily by regulation of HisG enzymatic activity. The chain is ATP phosphoribosyltransferase from Edwardsiella ictaluri (strain 93-146).